The primary structure comprises 131 residues: Probable histone H2A.3 (131 aa).

Positions 1–23 (MAGRGKQLGSGAAKKSTSRSSKA) are disordered. Positions 9-23 (GSGAAKKSTSRSSKA) are enriched in low complexity.

This sequence belongs to the histone H2A family. In terms of assembly, the nucleosome is a histone octamer containing two molecules each of H2A, H2B, H3 and H4 assembled in one H3-H4 heterotetramer and two H2A-H2B heterodimers. The octamer wraps approximately 147 bp of DNA. Not ubiquitinated. As to expression, expressed in meristems and dividing cells.

The protein localises to the nucleus. It is found in the chromosome. In terms of biological role, core component of nucleosome. Nucleosomes wrap and compact DNA into chromatin, limiting DNA accessibility to the cellular machineries which require DNA as a template. Histones thereby play a central role in transcription regulation, DNA repair, DNA replication and chromosomal stability. DNA accessibility is regulated via a complex set of post-translational modifications of histones, also called histone code, and nucleosome remodeling. This Arabidopsis thaliana (Mouse-ear cress) protein is Probable histone H2A.3.